The chain runs to 486 residues: ATP synthase subunit beta (486 aa).

171–178 serves as a coordination point for ATP; sequence GGAGVGKT.

This sequence belongs to the ATPase alpha/beta chains family. In terms of assembly, F-type ATPases have 2 components, CF(1) - the catalytic core - and CF(0) - the membrane proton channel. CF(1) has five subunits: alpha(3), beta(3), gamma(1), delta(1), epsilon(1). CF(0) has three main subunits: a(1), b(2) and c(9-12). The alpha and beta chains form an alternating ring which encloses part of the gamma chain. CF(1) is attached to CF(0) by a central stalk formed by the gamma and epsilon chains, while a peripheral stalk is formed by the delta and b chains.

Its subcellular location is the cell membrane. It catalyses the reaction ATP + H2O + 4 H(+)(in) = ADP + phosphate + 5 H(+)(out). Functionally, produces ATP from ADP in the presence of a proton gradient across the membrane. The catalytic sites are hosted primarily by the beta subunits. The sequence is that of ATP synthase subunit beta from Salinispora tropica (strain ATCC BAA-916 / DSM 44818 / JCM 13857 / NBRC 105044 / CNB-440).